The following is a 289-amino-acid chain: Energy-coupling factor transporter ATP-binding protein EcfA2 (289 aa).

In terms of domain architecture, ABC transporter spans 7-251 (IILDNVSYTY…IELLTKIEID (245 aa)). 44-51 (GTTGSGKS) provides a ligand contact to ATP.

Belongs to the ABC transporter superfamily. Energy-coupling factor EcfA family. As to quaternary structure, forms a stable energy-coupling factor (ECF) transporter complex composed of 2 membrane-embedded substrate-binding proteins (S component), 2 ATP-binding proteins (A component) and 2 transmembrane proteins (T component).

The protein resides in the cell membrane. ATP-binding (A) component of a common energy-coupling factor (ECF) ABC-transporter complex. Unlike classic ABC transporters this ECF transporter provides the energy necessary to transport a number of different substrates. This is Energy-coupling factor transporter ATP-binding protein EcfA2 from Mycoplasma capricolum subsp. capricolum (strain California kid / ATCC 27343 / NCTC 10154).